An 82-amino-acid chain; its full sequence is ATP synthase subunit c (82 aa).

Helical transmembrane passes span 7–27 (FVAL…CIGI) and 53–73 (FLLA…AMMF).

Belongs to the ATPase C chain family. F-type ATPases have 2 components, F(1) - the catalytic core - and F(0) - the membrane proton channel. F(1) has five subunits: alpha(3), beta(3), gamma(1), delta(1), epsilon(1). F(0) has three main subunits: a(1), b(2) and c(10-14). The alpha and beta chains form an alternating ring which encloses part of the gamma chain. F(1) is attached to F(0) by a central stalk formed by the gamma and epsilon chains, while a peripheral stalk is formed by the delta and b chains.

The protein resides in the cell inner membrane. F(1)F(0) ATP synthase produces ATP from ADP in the presence of a proton or sodium gradient. F-type ATPases consist of two structural domains, F(1) containing the extramembraneous catalytic core and F(0) containing the membrane proton channel, linked together by a central stalk and a peripheral stalk. During catalysis, ATP synthesis in the catalytic domain of F(1) is coupled via a rotary mechanism of the central stalk subunits to proton translocation. Functionally, key component of the F(0) channel; it plays a direct role in translocation across the membrane. A homomeric c-ring of between 10-14 subunits forms the central stalk rotor element with the F(1) delta and epsilon subunits. The polypeptide is ATP synthase subunit c (Polaromonas sp. (strain JS666 / ATCC BAA-500)).